The primary structure comprises 468 residues: Tissue alpha-L-fucosidase (468 aa).

An N-terminal signal peptide occupies residues 1-22 (MRSWVVGARLLLLLQLVLVLGA). T173 carries the phosphothreonine modification. 3 N-linked (GlcNAc...) asparagine glycosylation sites follow: N244, N271, and N320.

This sequence belongs to the glycosyl hydrolase 29 family. Homotetramer.

It is found in the lysosome. It catalyses the reaction an alpha-L-fucoside + H2O = L-fucose + an alcohol. The catalysed reaction is a neolactoside IV(2)-alpha-Fuc-nLc4Cer(d18:1(4E)) + H2O = a neolactoside nLc4Cer(d18:1(4E)) + L-fucose. The enzyme catalyses a neolactoside IV(2)-alpha-Fuc-nLc4Cer(d18:0) + H2O = a neolactoside nLc4Cer(d18:0) + L-fucose. Functionally, alpha-L-fucosidase is responsible for hydrolyzing the alpha-1,6-linked fucose joined to the reducing-end N-acetylglucosamine of the carbohydrate moieties of glycoproteins. The polypeptide is Tissue alpha-L-fucosidase (FUCA1) (Bos taurus (Bovine)).